The following is a 329-amino-acid chain: Putative GTPase Obg (329 aa).

The Obg domain maps to 1–159 (MQFIDQARIM…WPLQLELKLL (159 aa)). Positions 160–328 (AEVGIIGLPN…LKTQIWQQLG (169 aa)) constitute an OBG-type G domain. GTP-binding positions include 166–173 (GLPNAGKS), 191–195 (FTTLI), 213–216 (DIPG), 280–283 (SKIE), and 309–311 (SSA). Mg(2+)-binding residues include S173 and T193.

The protein belongs to the TRAFAC class OBG-HflX-like GTPase superfamily. OBG GTPase family. Monomer. Mg(2+) is required as a cofactor.

It is found in the plastid. It localises to the organellar chromatophore. In terms of biological role, an essential GTPase which binds GTP, GDP and possibly (p)ppGpp with moderate affinity, with high nucleotide exchange rates and a fairly low GTP hydrolysis rate. This Paulinella chromatophora protein is Putative GTPase Obg.